Here is an 86-residue protein sequence, read N- to C-terminus: Cytochrome c oxidase subunit 6B1 (86 aa).

Alanine 2 bears the N-acetylalanine mark. The region spanning 27–73 is the CHCH domain; it reads TRNCWQNYLDFHRCQKAMTAKGGDISVCEWYQRVYQSLCPTSWVTDW. Residues 30 to 40 carry the Cx9C motif motif; that stretch reads CWQNYLDFHRC. 2 cysteine pairs are disulfide-bonded: cysteine 30–cysteine 65 and cysteine 40–cysteine 54. The Cx10C motif motif lies at 54–65; the sequence is CEWYQRVYQSLC.

Belongs to the cytochrome c oxidase subunit 6B family. In terms of assembly, component of the cytochrome c oxidase (complex IV, CIV), a multisubunit enzyme composed of 14 subunits. The complex is composed of a catalytic core of 3 subunits MT-CO1, MT-CO2 and MT-CO3, encoded in the mitochondrial DNA, and 11 supernumerary subunits COX4I, COX5A, COX5B, COX6A, COX6B, COX6C, COX7A, COX7B, COX7C, COX8 and NDUFA4, which are encoded in the nuclear genome. The complex exists as a monomer or a dimer and forms supercomplexes (SCs) in the inner mitochondrial membrane with NADH-ubiquinone oxidoreductase (complex I, CI) and ubiquinol-cytochrome c oxidoreductase (cytochrome b-c1 complex, complex III, CIII), resulting in different assemblies (supercomplex SCI(1)III(2)IV(1) and megacomplex MCI(2)III(2)IV(2)).

The protein resides in the mitochondrion inner membrane. It functions in the pathway energy metabolism; oxidative phosphorylation. Functionally, component of the cytochrome c oxidase, the last enzyme in the mitochondrial electron transport chain which drives oxidative phosphorylation. The respiratory chain contains 3 multisubunit complexes succinate dehydrogenase (complex II, CII), ubiquinol-cytochrome c oxidoreductase (cytochrome b-c1 complex, complex III, CIII) and cytochrome c oxidase (complex IV, CIV), that cooperate to transfer electrons derived from NADH and succinate to molecular oxygen, creating an electrochemical gradient over the inner membrane that drives transmembrane transport and the ATP synthase. Cytochrome c oxidase is the component of the respiratory chain that catalyzes the reduction of oxygen to water. Electrons originating from reduced cytochrome c in the intermembrane space (IMS) are transferred via the dinuclear copper A center (CU(A)) of subunit 2 and heme A of subunit 1 to the active site in subunit 1, a binuclear center (BNC) formed by heme A3 and copper B (CU(B)). The BNC reduces molecular oxygen to 2 water molecules using 4 electrons from cytochrome c in the IMS and 4 protons from the mitochondrial matrix. This chain is Cytochrome c oxidase subunit 6B1 (COX6B1), found in Pongo abelii (Sumatran orangutan).